The chain runs to 554 residues: Bifunctional epoxide hydrolase 2 (554 aa).

Residues 1-224 are phosphatase; sequence MALRVAAFDL…KVTGTQFPEA (224 aa). Positions 9 and 11 each coordinate Mg(2+). Position 55 is an N6-succinyllysine (lysine 55). A phosphate-binding site is contributed by 123-124; it reads TN. Lysine 176 carries the post-translational modification N6-acetyllysine; alternate. Lysine 176 bears the N6-succinyllysine; alternate mark. Aspartate 185 contacts Mg(2+). N6-acetyllysine is present on residues lysine 191 and lysine 215. The tract at residues 233 to 554 is epoxide hydrolase; that stretch reads NDVSHGYVTV…IQNPSVTSKI (322 aa). In terms of domain architecture, AB hydrolase-1 spans 257–530; that stretch reads PAICLCHGFP…CGHWTQIEKP (274 aa). Aspartate 333 acts as the Nucleophile in catalysis. The residue at position 368 (serine 368) is a Phosphoserine. Substrate is bound at residue tyrosine 381. N6-succinyllysine occurs at positions 420 and 454. Tyrosine 465 serves as the catalytic Proton donor. Lysine 504 carries the post-translational modification N6-succinyllysine. Cysteine 521 carries S-(15-deoxy-Delta12,14-prostaglandin J2-9-yl)cysteine lipidation. Histidine 523 functions as the Proton acceptor in the catalytic mechanism. Positions 552–554 match the Microbody targeting signal motif; the sequence is SKI. Lysine 553 bears the N6-succinyllysine mark.

It belongs to the AB hydrolase superfamily. Epoxide hydrolase family. In terms of assembly, homodimer. The cofactor is Mg(2+). In terms of processing, the covalent modification of cysteine by 15-deoxy-Delta12,14-prostaglandin-J2 is autocatalytic and reversible. It may occur as an alternative to other cysteine modifications, such as S-nitrosylation and S-palmitoylation.

It localises to the cytoplasm. The protein resides in the peroxisome. The enzyme catalyses an epoxide + H2O = an ethanediol. It carries out the reaction (9S,10S)-10-hydroxy-9-(phosphooxy)octadecanoate + H2O = (9S,10S)-9,10-dihydroxyoctadecanoate + phosphate. The catalysed reaction is 8-hydroxy-(11S,12S)-epoxy-(5Z,9E,14Z)-eicosatrienoate + H2O = (8,11R,12S)-trihydroxy-(5Z,9E,14Z)-eicosatrienoate. It catalyses the reaction 10-hydroxy-(11S,12S)-epoxy- (5Z,8Z,14Z)-eicosatrienoate + H2O = (10,11S,12R)-trihydroxy-(5Z,8Z,14Z)-eicosatrienoate. The enzyme catalyses 12-phosphooxy-(9Z)-octadecenoate + H2O = 12-hydroxy-(9Z)-octadecenoate + phosphate. It carries out the reaction 12-phosphooxy-(9E)-octadecenoate + H2O = 12-hydroxy-(9E)-octadecenoate + phosphate. The catalysed reaction is 12-(phosphooxy)octadecanoate + H2O = 12-hydroxyoctadecanoate + phosphate. It catalyses the reaction 8,9-epoxy-(5Z,11Z,14Z)-eicosatrienoate + H2O = 8,9-dihydroxy-(5Z,11Z,14Z)-eicosatrienoate. The enzyme catalyses 11,12-epoxy-(5Z,8Z,14Z)-eicosatrienoate + H2O = 11,12-dihydroxy-(5Z,8Z,14Z)-eicosatrienoate. It carries out the reaction 14,15-epoxy-(5Z,8Z,11Z)-eicosatrienoate + H2O = 14,15-dihydroxy-(5Z,8Z,11Z)-eicosatrienoate. The catalysed reaction is 9,10-epoxy-(12Z)-octadecenoate + H2O = 9,10-dihydroxy-(12Z)-octadecenoate. It catalyses the reaction 1-tetradecanoyl-sn-glycerol 3-phosphate + H2O = 1-tetradecanoyl-sn-glycerol + phosphate. The enzyme catalyses 1-octadecanoyl-sn-glycero-3-phosphate + H2O = 1-octadecanoyl-sn-glycerol + phosphate. It carries out the reaction 1-(5Z,8Z,11Z,14Z-eicosatetraenoyl)-sn-glycero-3-phosphate + H2O = 1-(5Z,8Z,11Z,14Z-eicosatetraenoyl)-sn-glycerol + phosphate. The catalysed reaction is 1-hexadecanoyl-sn-glycero-3-phosphate + H2O = 1-hexadecanoyl-sn-glycerol + phosphate. It catalyses the reaction 1-(9Z-octadecenoyl)-sn-glycero-3-phosphate + H2O = 1-(9Z-octadecenoyl)-sn-glycerol + phosphate. The enzyme catalyses (8S,9R)-epoxy-(5Z,11Z,14Z)-eicosatrienoate + H2O = (8S,9S)-dihydroxy-(5Z,11Z,14Z)-eicosatrienoate. It carries out the reaction (11S,12R)-epoxy-(5Z,8Z,14Z)-eicosatrienoate + H2O = (11R,12R)-dihydroxy-(5Z,8Z,14Z)-eicosatrienoate. The catalysed reaction is (11S,12R)-epoxy-(5Z,8Z,14Z)-eicosatrienoate + H2O = (11S,12S)-dihydroxy-(5Z,8Z,14Z)-eicosatrienoate. It catalyses the reaction (14S,15R)-epoxy-(5Z,8Z,11Z)-eicosatrienoate + H2O = (14R,15R)-dihydroxy-(5Z,8Z,11Z)-eicosatrienoate. The enzyme catalyses (14S,15R)-epoxy-(5Z,8Z,11Z)-eicosatrienoate + H2O = (14S,15S)-dihydroxy-(5Z,8Z,11Z)-eicosatrienoate. It carries out the reaction (11R,12S)-epoxy-(5Z,8Z,14Z)-eicosatrienoate + H2O = (11S,12S)-dihydroxy-(5Z,8Z,14Z)-eicosatrienoate. The catalysed reaction is (11R,12S)-epoxy-(5Z,8Z,14Z)-eicosatrienoate + H2O = (11R,12R)-dihydroxy-(5Z,8Z,14Z)-eicosatrienoate. It catalyses the reaction (8S,9R)-epoxy-(5Z,11Z,14Z)-eicosatrienoate + H2O = (8R,9R)-dihydroxy-(5Z,11Z,14Z)-eicosatrienoate. The enzyme catalyses (14R,15S)-epoxy-(5Z,8Z,11Z)-eicosatrienoate + H2O = (14R,15R)-dihydroxy-(5Z,8Z,11Z)-eicosatrienoate. Inhibited by 1-(1-acetylpiperidin-4-yl)-3-(4-(trifl uoromethoxy)phenyl)urea (TPAU), 1-cyclohexyl-3-dodecylurea (CDU), 12-(3-adamantan-1-yl-ureido)-dodecanoic acid (AUDA), 1-((3S, 5S, 7S)-adamantan-1-yl)-3-(5-(2-(2-ethoxyethoxy) ethoxy)pentyl)urea (AEPU), N-adamantyl-N[']-cyclohexyl urea (ACU), 4-(((1S, 4S)-4-(3-((3S, 5S, 7S)-adamantan-1-yl) ureido)cyclohexyl)oxy)benzoic acid (c-AUCB), 4-(((1R, 4R)-4-(3-((3S, 5S, 7S)-adamantan-1-yl)ureido)cyclohexyl)oxy)benzoic acid (t-AUCB), 4-(((1R, 4R)-4-(3-(4(trifluoromethoxy)phenyl)ureido)cyclohexyl)oxy)benzoic acid (t-TAUCB) and to a lesser extent by 8-(3-((3S, 5S, 7S)-adamantan-1-yl)ureido) octanoic acid (AUOA). Phosphatase activity is inhibited by dodecyl-phosphate, phospholipids such as phospho-lysophosphatidic acids and fatty acids such as palmitic acid and lauric acid. Functionally, bifunctional enzyme. The C-terminal domain has epoxide hydrolase activity and acts on epoxides (alkene oxides, oxiranes) and arene oxides. Plays a role in xenobiotic metabolism by degrading potentially toxic epoxides. Also determines steady-state levels of physiological mediators. The N-terminal domain has lipid phosphatase activity, with the highest activity towards threo-9,10-phosphonooxy-hydroxy-octadecanoic acid, followed by erythro-9,10-phosphonooxy-hydroxy-octadecanoic acid, 12-phosphonooxy-octadec-9Z-enoic acid and 12-phosphonooxy-octadec-9E-enoic acid. In terms of biological role, bifunctional enzyme. The C-terminal domain has epoxide hydrolase activity and acts on epoxides (alkene oxides, oxiranes) and arene oxides. Plays a role in xenobiotic metabolism by degrading potentially toxic epoxides. Also determines steady-state levels of physiological mediators. Bifunctional enzyme. The N-terminal domain has lipid phosphatase activity, with the highest activity towards threo-9,10-phosphonooxy-hydroxy-octadecanoic acid, followed by erythro-9,10-phosphonooxy-hydroxy-octadecanoic acid, 12-phosphonooxy-octadec-9Z-enoic acid and 12-phosphonooxy-octadec-9E-enoic acid. Has phosphatase activity toward lyso-glycerophospholipids with also some lower activity toward lysolipids of sphingolipid and isoprenoid phosphates. This is Bifunctional epoxide hydrolase 2 from Rattus norvegicus (Rat).